We begin with the raw amino-acid sequence, 404 residues long: Alpha-galactosidase A (404 aa).

The signal sequence occupies residues 1–23 (MRKQLLLGLGLVSALLVSVQASA). 2 cysteine pairs are disulfide-bonded: C45-C77 and C124-C154. Residue D152 is the Nucleophile of the active site. 185–189 (EWGDN) is a substrate binding site. Catalysis depends on D207, which acts as the Proton donor.

It belongs to the glycosyl hydrolase 27 family.

It catalyses the reaction Hydrolysis of terminal, non-reducing alpha-D-galactose residues in alpha-D-galactosides, including galactose oligosaccharides, galactomannans and galactolipids.. Its function is as follows. Hydrolyzes galactomannan found in plant cell wall, by cleaving alpha-1,6-D-galactose side-chains from the mannan backbone. Appears to act in synergy with mannanase (ManA) to elicit hydrolysis of galactomannan. Has greater activity against galactomannans with decreased degree of polymerisation values. To a lesser extent, is also able to degrade other galactosides containing alpha-1,6-linked D-galactose, such as melibiose and stachyose. This chain is Alpha-galactosidase A (agaA), found in Cellvibrio japonicus (strain Ueda107) (Pseudomonas fluorescens subsp. cellulosa).